The sequence spans 426 residues: Histidine--tRNA ligase (426 aa).

Belongs to the class-II aminoacyl-tRNA synthetase family. Homodimer.

Its subcellular location is the cytoplasm. The catalysed reaction is tRNA(His) + L-histidine + ATP = L-histidyl-tRNA(His) + AMP + diphosphate + H(+). This chain is Histidine--tRNA ligase, found in Microcystis aeruginosa (strain NIES-843 / IAM M-2473).